The chain runs to 673 residues: Polyadenylate-binding protein, cytoplasmic and nuclear (673 aa).

The disordered stretch occupies residues 1–39 (MSAETATSPAPAAETPVAPAPATQTTPAEGAPTPAAAAP). 4 consecutive RRM domains span residues 46-124 (ASLY…WSQR), 134-211 (GNIF…HHVG), 227-304 (TNVY…RAQT), and 330-407 (VNLY…LAQR). The tract at residues 300-322 (GRAQTKSEREAELKKSHEEKRLE) is disordered. The span at 304–322 (TKSEREAELKKSHEEKRLE) shows a compositional bias: basic and acidic residues. Disordered regions lie at residues 509 to 572 (APGY…AGRL) and 644 to 673 (WGKD…EKKE). Positions 569–646 (AGRLDAQSLA…ALRVLAEWGK (78 aa)) constitute a PABC domain.

It belongs to the polyadenylate-binding protein type-1 family.

The protein resides in the cytoplasm. The protein localises to the nucleus. Its function is as follows. Binds the poly(A) tail of mRNA. Appears to be an important mediator of the multiple roles of the poly(A) tail in mRNA biogenesis, stability and translation. In the nucleus, involved in both mRNA cleavage and polyadenylation. Is also required for efficient mRNA export to the cytoplasm. Acts in concert with a poly(A)-specific nuclease (PAN) to affect poly(A) tail shortening, which may occur concomitantly with either nucleocytoplasmic mRNA transport or translational initiation. In the cytoplasm, stimulates translation initiation and regulates mRNA decay through translation termination-coupled poly(A) shortening, probably mediated by PAN. The sequence is that of Polyadenylate-binding protein, cytoplasmic and nuclear (PAB1) from Cryptococcus neoformans var. neoformans serotype D (strain B-3501A) (Filobasidiella neoformans).